Reading from the N-terminus, the 352-residue chain is Histidinol-phosphate aminotransferase (352 aa).

The residue at position 211 (Lys211) is an N6-(pyridoxal phosphate)lysine.

It belongs to the class-II pyridoxal-phosphate-dependent aminotransferase family. Histidinol-phosphate aminotransferase subfamily. As to quaternary structure, homodimer. Pyridoxal 5'-phosphate serves as cofactor.

The catalysed reaction is L-histidinol phosphate + 2-oxoglutarate = 3-(imidazol-4-yl)-2-oxopropyl phosphate + L-glutamate. It functions in the pathway amino-acid biosynthesis; L-histidine biosynthesis; L-histidine from 5-phospho-alpha-D-ribose 1-diphosphate: step 7/9. The polypeptide is Histidinol-phosphate aminotransferase (Haemophilus influenzae (strain PittGG)).